The sequence spans 892 residues: LEAF RUST 10 DISEASE-RESISTANCE LOCUS RECEPTOR-LIKE PROTEIN KINASE-like 2.8 (892 aa).

A signal peptide spans 1–27 (MYYHSLSSYSILFFLFSLFHHLPCASS). Over 28-496 (NQGLGWCESL…RFIATLVRYT (469 aa)) the chain is Extracellular. N-linked (GlcNAc...) asparagine glycosylation is found at N42, N71, N88, N112, N186, N222, N230, N286, N358, N384, N407, and N458. Residues 497 to 517 (FIALGALTGVVIVFLVLLCPC) traverse the membrane as a helical segment. Residues 518–892 (FRVQIFRKRK…TNSKLESSSL (375 aa)) are Cytoplasmic-facing. T547 carries the post-translational modification Phosphothreonine. Positions 556–854 (KSFTEVVGRG…ALEVPPRPVL (299 aa)) constitute a Protein kinase domain. ATP is bound by residues 562-570 (VGRGGFGIV) and K584. At Y629 the chain carries Phosphotyrosine. D680 (proton acceptor) is an active-site residue. Phosphothreonine occurs at positions 717 and 720.

It belongs to the protein kinase superfamily. Ser/Thr protein kinase family.

Its subcellular location is the membrane. It catalyses the reaction L-seryl-[protein] + ATP = O-phospho-L-seryl-[protein] + ADP + H(+). The enzyme catalyses L-threonyl-[protein] + ATP = O-phospho-L-threonyl-[protein] + ADP + H(+). This Arabidopsis thaliana (Mouse-ear cress) protein is LEAF RUST 10 DISEASE-RESISTANCE LOCUS RECEPTOR-LIKE PROTEIN KINASE-like 2.8.